A 279-amino-acid chain; its full sequence is MTNIITVNNLFFKYDSNQTHYQLENVSFHVKQGEWLSIIGHNGSGKSTTVRLIDGLLEAESGQIIIDGQELTEDNVWELRHKIGMVFQNPDNQFVGATVEDDVAFGLENKGIPLKDMKERVDQALDLVGMSEFKMREPARLSGGQKQRVAIAGAVAMRPQVIILDEATSMLDPEGRLELIRTIRAIRQKYNLTVISITHDLDEVALSDRVIVMKNGKVESTSTPKALFGRGNRLISLGLDVPFTSRLMAELAANGLDIGTEYLTEKELEEQLWELNLKM.

An ABC transporter domain is found at 5 to 240 (ITVNNLFFKY…GNRLISLGLD (236 aa)). 40–47 (GHNGSGKS) lines the ATP pocket.

This sequence belongs to the ABC transporter superfamily. Energy-coupling factor EcfA family. In terms of assembly, forms a stable energy-coupling factor (ECF) transporter complex composed of 2 membrane-embedded substrate-binding proteins (S component), 2 ATP-binding proteins (A component) and 2 transmembrane proteins (T component).

It is found in the cell membrane. Its function is as follows. ATP-binding (A) component of a common energy-coupling factor (ECF) ABC-transporter complex. Unlike classic ABC transporters this ECF transporter provides the energy necessary to transport a number of different substrates. The chain is Energy-coupling factor transporter ATP-binding protein EcfA1 from Streptococcus agalactiae serotype Ia (strain ATCC 27591 / A909 / CDC SS700).